The following is a 192-amino-acid chain: Pyridoxal 5'-phosphate synthase subunit PdxT (192 aa).

Residue 47–49 (GES) coordinates L-glutamine. Residue cysteine 79 is the Nucleophile of the active site. L-glutamine contacts are provided by residues arginine 106 and 134 to 135 (IR). Catalysis depends on charge relay system residues histidine 170 and glutamate 172.

Belongs to the glutaminase PdxT/SNO family. In terms of assembly, in the presence of PdxS, forms a dodecamer of heterodimers. Only shows activity in the heterodimer.

It carries out the reaction aldehydo-D-ribose 5-phosphate + D-glyceraldehyde 3-phosphate + L-glutamine = pyridoxal 5'-phosphate + L-glutamate + phosphate + 3 H2O + H(+). The enzyme catalyses L-glutamine + H2O = L-glutamate + NH4(+). The protein operates within cofactor biosynthesis; pyridoxal 5'-phosphate biosynthesis. Its function is as follows. Catalyzes the hydrolysis of glutamine to glutamate and ammonia as part of the biosynthesis of pyridoxal 5'-phosphate. The resulting ammonia molecule is channeled to the active site of PdxS. The chain is Pyridoxal 5'-phosphate synthase subunit PdxT from Anoxybacillus flavithermus (strain DSM 21510 / WK1).